Here is a 684-residue protein sequence, read N- to C-terminus: Agnestins biosynthesis cluster transcription factor AgnL11 (684 aa).

Residues 25–51 (CHFCRTKKLKCDRRFPCSNCRARRLSC) constitute a DNA-binding region (zn(2)-C6 fungal-type). Residues 76 to 103 (NEELSENINELKARLQRLEELISVNAEE) are a coiled coil. Residues 601–644 (KGSASARKDKNPIHGDTDRATPPGSSNLPQHDKSSSSSPAPPVW) are disordered. Basic and acidic residues predominate over residues 606 to 619 (ARKDKNPIHGDTDR).

It localises to the nucleus. In terms of biological role, transcription factor that regulates the expression of the gene cluster that mediates the biosynthesis of agnestins, dihydroxy-xanthone metabolites. In Paecilomyces divaricatus (Penicillium divaricatum), this protein is Agnestins biosynthesis cluster transcription factor AgnL11.